Reading from the N-terminus, the 204-residue chain is Somatotropin (204 aa).

Positions 1 to 17 (MDRAILLLSVLSVGVSS) are cleaved as a signal peptide. Residue Q18 is modified to Pyrrolidone carboxylic acid. H35 contacts Zn(2+). An intrachain disulfide couples C69 to C177. E186 is a binding site for Zn(2+). A disulfide bridge connects residues C194 and C202.

It belongs to the somatotropin/prolactin family.

It is found in the secreted. Functionally, growth hormone plays an important role in growth control and is involved in the regulation of several anabolic processes. Implicated as an osmoregulatory substance important for seawater adaptation. In Dicentrarchus labrax (European seabass), this protein is Somatotropin (gh).